Reading from the N-terminus, the 25-residue chain is Endoglucanase 1 (25 aa).

The disordered stretch occupies residues 1–25; sequence YDASLKPNLQIPQKNIPNNDAVNIK. Over residues 10-25 the composition is skewed to polar residues; it reads QIPQKNIPNNDAVNIK.

It carries out the reaction Endohydrolysis of (1-&gt;4)-beta-D-glucosidic linkages in cellulose, lichenin and cereal beta-D-glucans.. Functionally, this enzyme hydrolyzes cellotetraose, cellopentaose, and cellohexaose to cellobiose and cellotriose but does not hydrolyze cellobiose or cellotriose. In Ruminiclostridium josui (Clostridium josui), this protein is Endoglucanase 1.